The chain runs to 380 residues: Erythronate-4-phosphate dehydrogenase (380 aa).

Substrate contacts are provided by Ser-45 and Thr-66. NAD(+) is bound by residues Asp-146, Thr-174, 205–207 (ASR), and Asp-231. The active site involves Arg-207. Residue Glu-236 is part of the active site. His-253 functions as the Proton donor in the catalytic mechanism. Gly-256 contributes to the NAD(+) binding site. Tyr-257 lines the substrate pocket.

It belongs to the D-isomer specific 2-hydroxyacid dehydrogenase family. PdxB subfamily. As to quaternary structure, homodimer.

It localises to the cytoplasm. The enzyme catalyses 4-phospho-D-erythronate + NAD(+) = (R)-3-hydroxy-2-oxo-4-phosphooxybutanoate + NADH + H(+). The protein operates within cofactor biosynthesis; pyridoxine 5'-phosphate biosynthesis; pyridoxine 5'-phosphate from D-erythrose 4-phosphate: step 2/5. In terms of biological role, catalyzes the oxidation of erythronate-4-phosphate to 3-hydroxy-2-oxo-4-phosphonooxybutanoate. This chain is Erythronate-4-phosphate dehydrogenase, found in Pseudomonas putida (strain W619).